We begin with the raw amino-acid sequence, 89 residues long: Small ribosomal subunit protein uS15 (89 aa).

The protein belongs to the universal ribosomal protein uS15 family. As to quaternary structure, part of the 30S ribosomal subunit. Forms a bridge to the 50S subunit in the 70S ribosome, contacting the 23S rRNA.

One of the primary rRNA binding proteins, it binds directly to 16S rRNA where it helps nucleate assembly of the platform of the 30S subunit by binding and bridging several RNA helices of the 16S rRNA. Functionally, forms an intersubunit bridge (bridge B4) with the 23S rRNA of the 50S subunit in the ribosome. This is Small ribosomal subunit protein uS15 from Enterobacter sp. (strain 638).